The primary structure comprises 344 residues: Biotin synthase (344 aa).

Residues 40–267 form the Radical SAM core domain; that stretch reads AEVQVSTLLS…KSMVRLSAGR (228 aa). [4Fe-4S] cluster contacts are provided by Cys55, Cys59, and Cys62. [2Fe-2S] cluster is bound by residues Cys99, Cys130, Cys190, and Arg262.

It belongs to the radical SAM superfamily. Biotin synthase family. Homodimer. The cofactor is [4Fe-4S] cluster. It depends on [2Fe-2S] cluster as a cofactor.

It carries out the reaction (4R,5S)-dethiobiotin + (sulfur carrier)-SH + 2 reduced [2Fe-2S]-[ferredoxin] + 2 S-adenosyl-L-methionine = (sulfur carrier)-H + biotin + 2 5'-deoxyadenosine + 2 L-methionine + 2 oxidized [2Fe-2S]-[ferredoxin]. It functions in the pathway cofactor biosynthesis; biotin biosynthesis; biotin from 7,8-diaminononanoate: step 2/2. In terms of biological role, catalyzes the conversion of dethiobiotin (DTB) to biotin by the insertion of a sulfur atom into dethiobiotin via a radical-based mechanism. The chain is Biotin synthase from Xanthomonas oryzae pv. oryzae (strain PXO99A).